The following is a 141-amino-acid chain: Auxin-responsive protein SAUR63 (141 aa).

The protein belongs to the ARG7 family. As to expression, expressed in hypocotyls, cotyledons, petioles, young rosette leaves, apical portion of inflorescence stems, stamen filaments and petals.

The protein localises to the cell membrane. In terms of biological role, may promote auxin-stimulated organ elongation, such as hypocotyls, stamen filaments and petals. In Arabidopsis thaliana (Mouse-ear cress), this protein is Auxin-responsive protein SAUR63.